Consider the following 140-residue polypeptide: Endoribonuclease YbeY (140 aa).

Zn(2+) contacts are provided by His-100, His-104, and His-110.

The protein belongs to the endoribonuclease YbeY family. Zn(2+) serves as cofactor.

It localises to the cytoplasm. Its function is as follows. Single strand-specific metallo-endoribonuclease involved in late-stage 70S ribosome quality control and in maturation of the 3' terminus of the 16S rRNA. In Helicobacter pylori (strain Shi470), this protein is Endoribonuclease YbeY.